The primary structure comprises 146 residues: Ribosome maturation factor RimP (146 aa).

This sequence belongs to the RimP family.

It is found in the cytoplasm. Required for maturation of 30S ribosomal subunits. This is Ribosome maturation factor RimP from Helicobacter pylori (strain G27).